The following is a 77-amino-acid chain: Large ribosomal subunit protein bL28 (77 aa).

The protein belongs to the bacterial ribosomal protein bL28 family.

The sequence is that of Large ribosomal subunit protein bL28 from Polynucleobacter asymbioticus (strain DSM 18221 / CIP 109841 / QLW-P1DMWA-1) (Polynucleobacter necessarius subsp. asymbioticus).